A 381-amino-acid polypeptide reads, in one-letter code: Chymosin (381 aa).

The N-terminal stretch at 1 to 16 (MRCLVVLLAVFALSQG) is a signal peptide. The propeptide at 17–58 (AEITRIPLYKGKPLRKALKERGLLEDFLQKQQYGVSSEYSGF) is activation peptide. A Peptidase A1 domain is found at 74–378 (YFGKIYLGTP…DRANNLVGLA (305 aa)). The active site involves Asp92. 2 disulfide bridges follow: Cys105-Cys110 and Cys265-Cys269. Asp274 is a catalytic residue. A disulfide bond links Cys308 and Cys341.

Belongs to the peptidase A1 family. Monomer.

It carries out the reaction Broad specificity similar to that of pepsin A. Clots milk by cleavage of a single 104-Ser-Phe-|-Met-Ala-107 bond in kappa-chain of casein.. In terms of biological role, chymosin is synthesized in the mucosa of the stomach. The enzyme hydrolyzes casein to paracasein. In Ovis aries (Sheep), this protein is Chymosin (CYM).